Consider the following 262-residue polypeptide: Spindlin-W (262 aa).

The tract at residues 1–49 is disordered; it reads MKTPFGKSPAQRSRADAGHTRVSASMMKKRTSHKKHRNNVGPSKPISQP. The segment covering 27–38 has biased composition (basic residues); the sequence is MKKRTSHKKHRN.

It belongs to the SPIN/STSY family. Expressed predominantly in ovarian granulosa and thecal cell.

The protein localises to the nucleus. Functionally, may play a role in mitosis. This Gallus gallus (Chicken) protein is Spindlin-W (SPINW).